Here is a 217-residue protein sequence, read N- to C-terminus: Adenylate kinase (217 aa).

10–15 serves as a coordination point for ATP; that stretch reads GAGKGT. The tract at residues 30–59 is NMP; that stretch reads STGDMLRAAVKAGSPLGVKVKDIMASGQLV. AMP contacts are provided by residues Thr-31, Arg-36, 57-59, 85-88, and Gln-92; these read QLV and GFPR. The tract at residues 122–159 is LID; the sequence is GRRVHEASGRIYHVTHNPPKTEGVDDITGEPLVQRDDD. ATP-binding positions include Arg-123 and 132 to 133; that span reads IY. Residues Arg-156 and Arg-167 each contribute to the AMP site. Gly-202 lines the ATP pocket.

Belongs to the adenylate kinase family. As to quaternary structure, monomer.

It is found in the cytoplasm. It catalyses the reaction AMP + ATP = 2 ADP. Its pathway is purine metabolism; AMP biosynthesis via salvage pathway; AMP from ADP: step 1/1. In terms of biological role, catalyzes the reversible transfer of the terminal phosphate group between ATP and AMP. Plays an important role in cellular energy homeostasis and in adenine nucleotide metabolism. In Teredinibacter turnerae (strain ATCC 39867 / T7901), this protein is Adenylate kinase.